Consider the following 237-residue polypeptide: Thiamine-phosphate synthase (237 aa).

4-amino-2-methyl-5-(diphosphooxymethyl)pyrimidine-binding positions include glutamine 41–lysine 45 and asparagine 73. Residues aspartate 74 and aspartate 93 each contribute to the Mg(2+) site. Serine 112 contacts 4-amino-2-methyl-5-(diphosphooxymethyl)pyrimidine. 2-[(2R,5Z)-2-carboxy-4-methylthiazol-5(2H)-ylidene]ethyl phosphate is bound at residue threonine 143 to threonine 145. Lysine 146 is a binding site for 4-amino-2-methyl-5-(diphosphooxymethyl)pyrimidine. Glycine 192 contributes to the 2-[(2R,5Z)-2-carboxy-4-methylthiazol-5(2H)-ylidene]ethyl phosphate binding site.

It belongs to the thiamine-phosphate synthase family. Mg(2+) serves as cofactor.

The catalysed reaction is 2-[(2R,5Z)-2-carboxy-4-methylthiazol-5(2H)-ylidene]ethyl phosphate + 4-amino-2-methyl-5-(diphosphooxymethyl)pyrimidine + 2 H(+) = thiamine phosphate + CO2 + diphosphate. It catalyses the reaction 2-(2-carboxy-4-methylthiazol-5-yl)ethyl phosphate + 4-amino-2-methyl-5-(diphosphooxymethyl)pyrimidine + 2 H(+) = thiamine phosphate + CO2 + diphosphate. It carries out the reaction 4-methyl-5-(2-phosphooxyethyl)-thiazole + 4-amino-2-methyl-5-(diphosphooxymethyl)pyrimidine + H(+) = thiamine phosphate + diphosphate. The protein operates within cofactor biosynthesis; thiamine diphosphate biosynthesis; thiamine phosphate from 4-amino-2-methyl-5-diphosphomethylpyrimidine and 4-methyl-5-(2-phosphoethyl)-thiazole: step 1/1. Condenses 4-methyl-5-(beta-hydroxyethyl)thiazole monophosphate (THZ-P) and 2-methyl-4-amino-5-hydroxymethyl pyrimidine pyrophosphate (HMP-PP) to form thiamine monophosphate (TMP). This chain is Thiamine-phosphate synthase, found in Arthrobacter sp. (strain FB24).